Reading from the N-terminus, the 201-residue chain is Urease accessory protein UreG (201 aa).

11 to 18 is a GTP binding site; that stretch reads GPVGSGKT.

Belongs to the SIMIBI class G3E GTPase family. UreG subfamily. As to quaternary structure, homodimer. UreD, UreF and UreG form a complex that acts as a GTP-hydrolysis-dependent molecular chaperone, activating the urease apoprotein by helping to assemble the nickel containing metallocenter of UreC. The UreE protein probably delivers the nickel.

The protein localises to the cytoplasm. Its function is as follows. Facilitates the functional incorporation of the urease nickel metallocenter. This process requires GTP hydrolysis, probably effectuated by UreG. The chain is Urease accessory protein UreG from Synechococcus sp. (strain CC9902).